Reading from the N-terminus, the 138-residue chain is Small ribosomal subunit protein uS11c (138 aa).

The disordered stretch occupies residues 1–22 (MAKAIPKISSRRNGRIGSRKGA). Over residues 9–22 (SSRRNGRIGSRKGA) the composition is skewed to basic residues.

It belongs to the universal ribosomal protein uS11 family. In terms of assembly, part of the 30S ribosomal subunit.

It localises to the plastid. The protein localises to the chloroplast. This is Small ribosomal subunit protein uS11c from Nicotiana tabacum (Common tobacco).